Here is a 525-residue protein sequence, read N- to C-terminus: GMP synthase [glutamine-hydrolyzing] (525 aa).

Residues 9–207 (RILILDFGSQ…ILDICGCEAL (199 aa)) form the Glutamine amidotransferase type-1 domain. Cysteine 86 serves as the catalytic Nucleophile. Catalysis depends on residues histidine 181 and glutamate 183. The GMPS ATP-PPase domain occupies 208 to 400 (WTPSKIAEDA…LGLPYDMVYR (193 aa)). ATP is bound at residue 235 to 241 (SGGVDSS).

As to quaternary structure, homodimer.

The catalysed reaction is XMP + L-glutamine + ATP + H2O = GMP + L-glutamate + AMP + diphosphate + 2 H(+). The protein operates within purine metabolism; GMP biosynthesis; GMP from XMP (L-Gln route): step 1/1. In terms of biological role, catalyzes the synthesis of GMP from XMP. The sequence is that of GMP synthase [glutamine-hydrolyzing] from Pseudomonas fluorescens (strain ATCC BAA-477 / NRRL B-23932 / Pf-5).